A 238-amino-acid chain; its full sequence is Triosephosphate isomerase (238 aa).

7–9 (NFK) is a binding site for substrate. His91 serves as the catalytic Electrophile. Residue Glu158 is the Proton acceptor of the active site. Gly164 and Ser200 together coordinate substrate.

The protein belongs to the triosephosphate isomerase family. In terms of assembly, homodimer.

The protein localises to the cytoplasm. The enzyme catalyses D-glyceraldehyde 3-phosphate = dihydroxyacetone phosphate. Its pathway is carbohydrate biosynthesis; gluconeogenesis. The protein operates within carbohydrate degradation; glycolysis; D-glyceraldehyde 3-phosphate from glycerone phosphate: step 1/1. In terms of biological role, involved in the gluconeogenesis. Catalyzes stereospecifically the conversion of dihydroxyacetone phosphate (DHAP) to D-glyceraldehyde-3-phosphate (G3P). This is Triosephosphate isomerase from Ureaplasma parvum serovar 3 (strain ATCC 27815 / 27 / NCTC 11736).